The following is a 305-amino-acid chain: Aspartate carbamoyltransferase catalytic subunit (305 aa).

The carbamoyl phosphate site is built by Arg-53 and Thr-54. Residue Lys-82 participates in L-aspartate binding. The carbamoyl phosphate site is built by Arg-103, His-131, and Gln-134. L-aspartate is bound by residues Arg-164 and Arg-226. Positions 265 and 266 each coordinate carbamoyl phosphate.

Belongs to the aspartate/ornithine carbamoyltransferase superfamily. ATCase family. Heterooligomer of catalytic and regulatory chains.

The enzyme catalyses carbamoyl phosphate + L-aspartate = N-carbamoyl-L-aspartate + phosphate + H(+). Its pathway is pyrimidine metabolism; UMP biosynthesis via de novo pathway; (S)-dihydroorotate from bicarbonate: step 2/3. Functionally, catalyzes the condensation of carbamoyl phosphate and aspartate to form carbamoyl aspartate and inorganic phosphate, the committed step in the de novo pyrimidine nucleotide biosynthesis pathway. The protein is Aspartate carbamoyltransferase catalytic subunit of Ignicoccus hospitalis (strain KIN4/I / DSM 18386 / JCM 14125).